Consider the following 432-residue polypeptide: Serine--tRNA ligase (432 aa).

L-serine is bound at residue 238-240; it reads TAE. Position 269-271 (269-271) interacts with ATP; the sequence is RSE. Position 292 (E292) interacts with L-serine. 356 to 359 lines the ATP pocket; that stretch reads EVSS. L-serine is bound at residue S392.

This sequence belongs to the class-II aminoacyl-tRNA synthetase family. Type-1 seryl-tRNA synthetase subfamily. In terms of assembly, homodimer. The tRNA molecule binds across the dimer.

The protein localises to the cytoplasm. The catalysed reaction is tRNA(Ser) + L-serine + ATP = L-seryl-tRNA(Ser) + AMP + diphosphate + H(+). It carries out the reaction tRNA(Sec) + L-serine + ATP = L-seryl-tRNA(Sec) + AMP + diphosphate + H(+). The protein operates within aminoacyl-tRNA biosynthesis; selenocysteinyl-tRNA(Sec) biosynthesis; L-seryl-tRNA(Sec) from L-serine and tRNA(Sec): step 1/1. Its function is as follows. Catalyzes the attachment of serine to tRNA(Ser). Is also able to aminoacylate tRNA(Sec) with serine, to form the misacylated tRNA L-seryl-tRNA(Sec), which will be further converted into selenocysteinyl-tRNA(Sec). The chain is Serine--tRNA ligase from Buchnera aphidicola subsp. Baizongia pistaciae (strain Bp).